Reading from the N-terminus, the 92-residue chain is Small ribosomal subunit protein bS20 (92 aa).

The tract at residues 1–24 is disordered; the sequence is MANSAQARKRARQAAKANSHNSAL.

Belongs to the bacterial ribosomal protein bS20 family.

In terms of biological role, binds directly to 16S ribosomal RNA. The sequence is that of Small ribosomal subunit protein bS20 from Paraburkholderia xenovorans (strain LB400).